A 267-amino-acid chain; its full sequence is Glutamate racemase (267 aa).

Substrate-binding positions include 9-10 (DS) and 41-42 (YS). Cys73 (proton donor/acceptor) is an active-site residue. 74–75 (NT) serves as a coordination point for substrate. Cys184 serves as the catalytic Proton donor/acceptor. 185–186 (TH) contributes to the substrate binding site.

It belongs to the aspartate/glutamate racemases family.

It catalyses the reaction L-glutamate = D-glutamate. It participates in cell wall biogenesis; peptidoglycan biosynthesis. In terms of biological role, provides the (R)-glutamate required for cell wall biosynthesis. This is Glutamate racemase from Glaesserella parasuis serovar 5 (strain SH0165) (Haemophilus parasuis).